Consider the following 530-residue polypeptide: UDP-glucuronosyltransferase 2B7 (530 aa).

Positions 1 to 17 (MPQKWISALLLLQISFC) are cleaved as a signal peptide. The N-linked (GlcNAc...) asparagine glycan is linked to Asn316. Residues 374–380 (THGGANG) and Glu400 each bind UDP-alpha-D-glucuronate. Residues 496–516 (IGFLLACVLAIVLLAVKCCLF) traverse the membrane as a helical segment.

Belongs to the UDP-glycosyltransferase family.

It is found in the endoplasmic reticulum membrane. It carries out the reaction glucuronate acceptor + UDP-alpha-D-glucuronate = acceptor beta-D-glucuronoside + UDP + H(+). It catalyses the reaction 17alpha-estradiol + UDP-alpha-D-glucuronate = 17alpha-estradiol 17-O-(beta-D-glucuronate) + UDP + H(+). The enzyme catalyses 17beta-estradiol + UDP-alpha-D-glucuronate = 17beta-estradiol 17-O-(beta-D-glucuronate) + UDP + H(+). The catalysed reaction is 2-hydroxy-17beta-estradiol + UDP-alpha-D-glucuronate = 2-hydroxy-17beta-estradiol 3-O-(beta-D-glucuronate) + UDP + H(+). It carries out the reaction 4-hydroxy-17beta-estradiol + UDP-alpha-D-glucuronate = 17beta-estradiol 4-O-(beta-D-glucuronate) + UDP + H(+). It catalyses the reaction 4-hydroxyestrone + UDP-alpha-D-glucuronate = estrone 4-O-(beta-D-glucuronate) + UDP + H(+). The enzyme catalyses 16alpha-hydroxyestrone + UDP-alpha-D-glucuronate = 16alpha-hydroxyestrone 16-O-(beta-D-glucuronate) + UDP + H(+). The catalysed reaction is 16alpha,17beta-estriol + UDP-alpha-D-glucuronate = 16alpha,17beta-estriol 16-O-(beta-D-glucuronate) + UDP + H(+). It carries out the reaction 16beta,17beta-estriol + UDP-alpha-D-glucuronate = 16beta,17beta-estriol 16-O-(beta-D-glucuronate) + UDP + H(+). It catalyses the reaction 16alpha,17alpha-estriol + UDP-alpha-D-glucuronate = 16alpha,17alpha-estriol 16-O-(beta-D-glucuronate) + UDP + H(+). The enzyme catalyses 16alpha,17alpha-estriol + UDP-alpha-D-glucuronate = 16alpha,17alpha-estriol 17-O-(beta-D-glucuronate) + UDP + H(+). The catalysed reaction is epitestosterone + UDP-alpha-D-glucuronate = epitestosterone 17-O-(beta-D-glucuronate) + UDP + H(+). It carries out the reaction hyodeoxycholate + UDP-alpha-D-glucuronate = hyodeoxycholate 6-O-(beta-D-glucuronate) + UDP + H(+). It catalyses the reaction hyocholate + UDP-alpha-D-glucuronate = hyocholate 6-O-(beta-D-glucuronate) + UDP + H(+). The enzyme catalyses all-trans-retinoate + UDP-alpha-D-glucuronate = all-trans-retinoyl-1-O-(beta-D-glucuronate) + UDP. The catalysed reaction is all-trans-4-hydroxyretinoate + UDP-alpha-D-glucuronate = all-trans-4-hydroxy-4-O-(beta-D-glucuronide)-retinoate + UDP + H(+). It carries out the reaction (E)-ferulate + UDP-alpha-D-glucuronate = (E)-ferulic acid beta-D-glucuronate ester + UDP. It catalyses the reaction 8-iso-prostaglandin F2alpha + UDP-alpha-D-glucuronate = 8-iso-prostaglandin F2alpha-glucuronide + UDP + H(+). The enzyme catalyses 5-epi-5-F2t-IsoP + UDP-alpha-D-glucuronate = 5-epi-5-F2t-IsoP-glucuronide + UDP + H(+). The catalysed reaction is (5Z,8Z,11Z,14Z)-eicosatetraenoate + UDP-alpha-D-glucuronate = O-[(5Z),(8Z),(11Z),(14Z)-eicosatetraenoyl]-beta-D-glucuronate + UDP. It carries out the reaction 15-hydroxy-(5Z,8Z,11Z,13E)-eicosatetraenoate + UDP-alpha-D-glucuronate = 15-O-(beta-D-glucuronosyl)-(5Z,8Z,11Z,14Z)-eicosatetraenoate + UDP + H(+). It catalyses the reaction 20-hydroxy-(5Z,8Z,11Z,14Z)-eicosatetraenoate + UDP-alpha-D-glucuronate = 20-O-(beta-D-glucuronosyl)-(5Z,8Z,11Z,14Z)-eicosatetraenoate + UDP + H(+). The enzyme catalyses (E)-ferulate + UDP-alpha-D-glucuronate = (E)-4-O-(beta-D-glucuronosyl)-ferulate + UDP + H(+). The catalysed reaction is prostaglandin B1 + UDP-alpha-D-glucuronate = 15-O-(beta-D-glucuronosyl)-prostaglandin B1 + UDP + H(+). It carries out the reaction mycophenolate + UDP-alpha-D-glucuronate = mycophenolic acid O-acyl-beta-D-glucuronide + UDP. It catalyses the reaction losartan + UDP-alpha-D-glucuronate = losartan-2-N-beta-D-glucuronide + UDP. The enzyme catalyses candesartan + UDP-alpha-D-glucuronate = candesartan O-beta-D-glucuronoside + UDP. The catalysed reaction is candesartan + UDP-alpha-D-glucuronate = candesartan-2-N-beta-D-glucuronide + UDP. It carries out the reaction zolasartan + UDP-alpha-D-glucuronate = zolarsartan O-beta-D-glucuronoside + UDP. Its function is as follows. UDP-glucuronosyltransferase (UGT) that catalyzes phase II biotransformation reactions in which lipophilic substrates are conjugated with glucuronic acid to increase the metabolite's water solubility, thereby facilitating excretion into either the urine or bile. Essential for the elimination and detoxification of drugs, xenobiotics and endogenous compounds. Catalyzes the glucuronidation of endogenous steroid hormones such as androgens (epitestosterone, androsterone) and estrogens (estradiol, epiestradiol, estriol, catechol estrogens). Also regulates the levels of retinoic acid, a major metabolite of vitamin A involved in apoptosis, cellular growth and differentiation, and embryonic development. Contributes to bile acid (BA) detoxification by catalyzing the glucuronidation of BA substrates, which are natural detergents for dietary lipids absorption. Involved in the glucuronidation of arachidonic acid (AA) and AA-derived eicosanoids including 15-HETE, 20-HETE, PGE2, PGB1 and F2-isoprostanes (8-iso-PGF2alpha and 5-epi-5-F2t-IsoP). Involved in the glucuronidation of the phytochemical ferulic acid at the phenolic or the carboxylic acid group. Involved in the glucuronidation of the AGTR1 angiotensin receptor antagonist losartan, caderastan and zolarsatan, drugs which can inhibit the effect of angiotensin II. Also metabolizes mycophenolate, an immunosuppressive agent. This chain is UDP-glucuronosyltransferase 2B7, found in Rattus norvegicus (Rat).